The primary structure comprises 783 residues: Polyribonucleotide nucleotidyltransferase 1, mitochondrial (783 aa).

The N-terminal 46 residues, 1–46 (MAACRYCCSCLRLRPLSDGPFCLPGRDRALTQLLVRALWSSTGSRA), are a transit peptide targeting the mitochondrion. N6-acetyllysine is present on residues Lys250, Lys264, Lys285, and Lys289. Lys552 is modified (N6-succinyllysine). The 60-residue stretch at 605 to 664 (PVVETVQVPLSKRAKFVGPGGYNLKKLQAETGVTISQVDEETFSVFAPTPSALHEARDFI) folds into the KH domain. One can recognise an S1 motif domain in the interval 679 to 750 (GAVYTATITE…ADGRMRLSRK (72 aa)). A phosphoserine mark is found at Ser754 and Ser782.

Belongs to the polyribonucleotide nucleotidyltransferase family. Homotrimer; in free form. Homooligomer. Component of the mitochondrial degradosome (mtEXO) complex which is a heteropentamer containing 2 copies of SUPV3L1 and 3 copies of PNPT1. As part of the mitochondrial degradosome complex, interacts with GRSF1 in an RNA-dependent manner; the interaction enhances the activity of the complex. Interacts with TCL1A; the interaction has no effect on PNPT1 exonuclease activity.

The protein resides in the cytoplasm. It is found in the mitochondrion matrix. It localises to the mitochondrion intermembrane space. It catalyses the reaction RNA(n+1) + phosphate = RNA(n) + a ribonucleoside 5'-diphosphate. In terms of biological role, RNA-binding protein implicated in numerous RNA metabolic processes. Catalyzes the phosphorolysis of single-stranded polyribonucleotides processively in the 3'-to-5' direction. Mitochondrial intermembrane factor with RNA-processing exoribonulease activity. Component of the mitochondrial degradosome (mtEXO) complex, that degrades 3' overhang double-stranded RNA with a 3'-to-5' directionality in an ATP-dependent manner. Involved in the degradation of non-coding mitochondrial transcripts (MT-ncRNA) and tRNA-like molecules. Required for correct processing and polyadenylation of mitochondrial mRNAs. Plays a role as a cytoplasmic RNA import factor that mediates the translocation of small RNA components like the 5S RNA, the RNA subunit of ribonuclease P and the mitochondrial RNA-processing (MRP) RNA, into the mitochondrial matrix. Plays a role in mitochondrial morphogenesis and respiration; regulates the expression of the electron transport chain (ETC) components at the mRNA and protein levels. In the cytoplasm, shows a 3'-to-5' exoribonuclease mediating mRNA degradation activity; degrades c-myc mRNA upon treatment with IFNB1/IFN-beta, resulting in a growth arrest in melanoma cells. Regulates the stability of specific mature miRNAs in melanoma cells; specifically and selectively degrades miR-221, preferentially. Also plays a role in RNA cell surveillance by cleaning up oxidized RNAs. Binds to the RNA subunit of ribonuclease P, MRP RNA and miR-221 microRNA. The chain is Polyribonucleotide nucleotidyltransferase 1, mitochondrial (PNPT1) from Pongo abelii (Sumatran orangutan).